The following is a 190-amino-acid chain: Adenine phosphoribosyltransferase (190 aa).

It belongs to the purine/pyrimidine phosphoribosyltransferase family. As to quaternary structure, homodimer.

It localises to the cytoplasm. It carries out the reaction AMP + diphosphate = 5-phospho-alpha-D-ribose 1-diphosphate + adenine. It participates in purine metabolism; AMP biosynthesis via salvage pathway; AMP from adenine: step 1/1. In terms of biological role, catalyzes a salvage reaction resulting in the formation of AMP, that is energically less costly than de novo synthesis. The protein is Adenine phosphoribosyltransferase of Cupriavidus pinatubonensis (strain JMP 134 / LMG 1197) (Cupriavidus necator (strain JMP 134)).